The sequence spans 410 residues: DNA replication and repair protein RecF (410 aa).

30–37 (GPNGHGKT) contacts ATP.

Belongs to the RecF family.

The protein localises to the cytoplasm. The RecF protein is involved in DNA metabolism; it is required for DNA replication and normal SOS inducibility. RecF binds preferentially to single-stranded, linear DNA. It also seems to bind ATP. The chain is DNA replication and repair protein RecF from Rhodococcus opacus (strain B4).